The following is a 47-amino-acid chain: Large ribosomal subunit protein bL34 (47 aa).

The protein belongs to the bacterial ribosomal protein bL34 family.

This Mycobacterium leprae (strain TN) protein is Large ribosomal subunit protein bL34 (rpmH).